The primary structure comprises 246 residues: Hydroxyacylglutathione hydrolase (246 aa).

7 residues coordinate Zn(2+): His-58, His-60, Asp-62, His-63, His-117, Asp-137, and His-175.

The protein belongs to the metallo-beta-lactamase superfamily. Glyoxalase II family. Monomer. The cofactor is Zn(2+).

It carries out the reaction an S-(2-hydroxyacyl)glutathione + H2O = a 2-hydroxy carboxylate + glutathione + H(+). It participates in secondary metabolite metabolism; methylglyoxal degradation; (R)-lactate from methylglyoxal: step 2/2. Thiolesterase that catalyzes the hydrolysis of S-D-lactoyl-glutathione to form glutathione and D-lactic acid. This Prochlorococcus marinus (strain MIT 9301) protein is Hydroxyacylglutathione hydrolase.